A 1066-amino-acid polypeptide reads, in one-letter code: Pumilio homolog 2 (1066 aa).

The interaction with SNAPIN stretch occupies residues 1–260 (MNHDFQALAL…ATVGLFDYNS (260 aa)). 3 positions are modified to phosphoserine: Ser67, Ser82, and Ser102. The disordered stretch occupies residues 106–204 (KLDSRFRKGN…NPSEGLGPLP (99 aa)). Residues 119–133 (RDAETDGPEKGDQKG) show a composition bias toward basic and acidic residues. Ser136, Ser178, and Ser182 each carry phosphoserine. A phosphothreonine mark is found at Thr184 and Thr396. Positions 494 to 553 (STNGLFRPIGTQPPQQQQQQPSTNLQSNSFYGSSSLTNSSQSSSLFSHGPGQPGSTSLGF) are disordered. Residues 505 to 514 (QPPQQQQQQP) show a composition bias toward low complexity. Residues 515–525 (STNLQSNSFYG) are compositionally biased toward polar residues. Residues 526–540 (SSSLTNSSQSSSLFS) show a composition bias toward low complexity. Phosphoserine occurs at positions 587 and 592. Residues 620–650 (SPIGMPLPSQTPGHSLTPPPSLSSHGSSSSL) are disordered. A compositionally biased stretch (low complexity) spans 630–650 (TPGHSLTPPPSLSSHGSSSSL). Arg674 carries the omega-N-methylarginine modification. 2 positions are modified to phosphoserine: Ser684 and Ser700. The 343-residue stretch at 706–1048 (GRSRLLEDFR…HILAKLEKYY (343 aa)) folds into the PUM-HD domain. Pumilio repeat units follow at residues 726–761 (DLIG…MVFN), 762–797 (EILQ…ALAT), 798–835 (RIRG…EMVK), 836–871 (ELDG…FIID), 872–907 (AFKG…PILE), 908–943 (ELHQ…KIVS), 944–979 (EIRG…LLID), and 983–1022 (CQND…IIMH). Residues 741–745 (SRFIQ) are adenine-nucleotide binding in RNA target. The uracil-nucleotide binding in RNA target stretch occupies residues 777–781 (NYVIQ). The adenine-nucleotide binding in RNA target stretch occupies residues 813-817 (CRVIQ). Residues 851–855 (NHVVQ) form a non-specific-nucleotide binding in RNA target region. Positions 887-891 (CRVIQ) are adenine-nucleotide binding in RNA target. Residues 923 to 927 (NYVIQ) form a uracil-nucleotide binding in RNA target region. The tract at residues 959-963 (SNVVE) is guanine-nucleotide binding in RNA target. A uracil-nucleotide binding in RNA target region spans residues 1002–1006 (NYVVQ).

As to quaternary structure, homodimer; homodimerizes in vitro. Interacts with DAZ1, DAZL and NANOS1 via its pumilio repeats. Interacts with NANOS3. Interacts with SNAPIN. Recruits the CCR4-POP2-NOT deadenylase leading to translational inhibition and mRNA degradation. Interacts with DDX20. In case of viral infection, interacts with DHX58. Interacts with TRIM71 (via NHL repeats) in an RNA-dependent manner. In terms of tissue distribution, expressed in male germ cells of adult testis (at protein level). Highly expressed in testis and ovary. Predominantly expressed in stem cells and germ cells. Expressed at lower level in brain, heart, kidney, liver, muscle, placenta, intestine and stomach Expressed in cerebellum, corpus callosum, caudate nucleus, hippocampus, medulla oblongata and putamen. Expressed in all fetal tissues tested.

It is found in the cytoplasm. Its subcellular location is the cytoplasmic granule. It localises to the perinuclear region. Sequence-specific RNA-binding protein that acts as a post-transcriptional repressor by binding the 3'-UTR of mRNA targets. Binds to an RNA consensus sequence, the Pumilio Response Element (PRE), 5'-UGUANAUA-3', that is related to the Nanos Response Element (NRE) (, PubMed:21397187). Mediates post-transcriptional repression of transcripts via different mechanisms: acts via direct recruitment of the CCR4-POP2-NOT deadenylase leading to translational inhibition and mRNA degradation. Also mediates deadenylation-independent repression by promoting accessibility of miRNAs. Acts as a post-transcriptional repressor of E2F3 mRNAs by binding to its 3'-UTR and facilitating miRNA regulation. Plays a role in cytoplasmic sensing of viral infection. Represses a program of genes necessary to maintain genomic stability such as key mitotic, DNA repair and DNA replication factors. Its ability to repress those target mRNAs is regulated by the lncRNA NORAD (non-coding RNA activated by DNA damage) which, due to its high abundance and multitude of PUMILIO binding sites, is able to sequester a significant fraction of PUM1 and PUM2 in the cytoplasm. May regulate DCUN1D3 mRNA levels. May support proliferation and self-renewal of stem cells. Binds specifically to miRNA MIR199A precursor, with PUM1, regulates miRNA MIR199A expression at a postranscriptional level. This Homo sapiens (Human) protein is Pumilio homolog 2 (PUM2).